A 183-amino-acid chain; its full sequence is Translation initiation factor IF-3 (183 aa).

The span at 1 to 13 shows a compositional bias: polar residues; that stretch reads MKQPDRNQQQGAK. The disordered stretch occupies residues 1–24; sequence MKQPDRNQQQGAKSNRPAINDEIR.

This sequence belongs to the IF-3 family. As to quaternary structure, monomer.

The protein resides in the cytoplasm. Functionally, IF-3 binds to the 30S ribosomal subunit and shifts the equilibrium between 70S ribosomes and their 50S and 30S subunits in favor of the free subunits, thus enhancing the availability of 30S subunits on which protein synthesis initiation begins. The chain is Translation initiation factor IF-3 from Acinetobacter baylyi (strain ATCC 33305 / BD413 / ADP1).